Consider the following 255-residue polypeptide: NAD kinase (255 aa).

The Proton acceptor role is filled by aspartate 44. Residues 44–45 (DG), histidine 49, 114–115 (NE), aspartate 144, alanine 152, 155–160 (SAYNLS), and glutamine 216 contribute to the NAD(+) site.

Belongs to the NAD kinase family. The cofactor is a divalent metal cation.

Its subcellular location is the cytoplasm. It carries out the reaction NAD(+) + ATP = ADP + NADP(+) + H(+). In terms of biological role, involved in the regulation of the intracellular balance of NAD and NADP, and is a key enzyme in the biosynthesis of NADP. Catalyzes specifically the phosphorylation on 2'-hydroxyl of the adenosine moiety of NAD to yield NADP. The protein is NAD kinase of Rickettsia rickettsii (strain Iowa).